An 81-amino-acid chain; its full sequence is Centromere protein X (81 aa).

At Met1 the chain carries N-acetylmethionine.

It belongs to the CENP-X/MHF2 family. Heterodimer with CENPX, sometimes called MHF; this interaction stabilizes both partners. MHF heterodimers can assemble to form tetrameric structures. MHF also coassemble with CENPT-CENPW heterodimers at centromeres to form the tetrameric CENP-T-W-S-X complex. Forms a discrete complex with FANCM and CENPX, called FANCM-MHF; this interaction, probably mediated by direct binding between CENPS and FANCM, leads to synergistic activation of double-stranded DNA binding and strongly stimulates FANCM-mediated DNA remodeling. Recruited by FANCM to the Fanconi anemia (FA) core complex, which consists of CENPS, CENPX, FANCA, FANCB, FANCC, FANCE, FANCF, FANCG, FANCL, FANCM, FAAP24 and FAAP100. The FA core complex associates with Bloom syndrome (BLM) complex, which consists of at least BLM, DNA topoisomerase 3-alpha (TOP3A), RMI1/BLAP75, RPA1/RPA70 and RPA2/RPA32. The super complex between FA and BLM is called BRAFT.

The protein resides in the nucleus. It is found in the chromosome. The protein localises to the centromere. It localises to the kinetochore. Functionally, DNA-binding component of the Fanconi anemia (FA) core complex. Required for the normal activation of the FA pathway, leading to monoubiquitination of the FANCI-FANCD2 complex in response to DNA damage, cellular resistance to DNA cross-linking drugs, and prevention of chromosomal breakage. In complex with CENPS (MHF heterodimer), crucial cofactor for FANCM in both binding and ATP-dependent remodeling of DNA. Stabilizes FANCM. In complex with CENPS and FANCM (but not other FANC proteins), rapidly recruited to blocked forks and promotes gene conversion at blocked replication forks. In complex with CENPS, CENPT and CENPW (CENP-T-W-S-X heterotetramer), involved in the formation of a functional kinetochore outer plate, which is essential for kinetochore-microtubule attachment and faithful mitotic progression. As a component of MHF and CENP-T-W-S-X complexes, binds DNA and bends it to form a nucleosome-like structure. DNA-binding function is fulfilled in the presence of CENPS, with the following preference for DNA substates: Holliday junction &gt; double-stranded &gt; splay arm &gt; single-stranded. Does not bind DNA on its own. This Pongo abelii (Sumatran orangutan) protein is Centromere protein X (CENPX).